The following is a 154-amino-acid chain: 6,7-dimethyl-8-ribityllumazine synthase (154 aa).

Residues phenylalanine 22, 56–58 (AFE), and 80–82 (AVI) each bind 5-amino-6-(D-ribitylamino)uracil. Residue 85 to 86 (AT) participates in (2S)-2-hydroxy-3-oxobutyl phosphate binding. Histidine 88 acts as the Proton donor in catalysis. A 5-amino-6-(D-ribitylamino)uracil-binding site is contributed by phenylalanine 113. Arginine 127 is a binding site for (2S)-2-hydroxy-3-oxobutyl phosphate.

This sequence belongs to the DMRL synthase family.

It carries out the reaction (2S)-2-hydroxy-3-oxobutyl phosphate + 5-amino-6-(D-ribitylamino)uracil = 6,7-dimethyl-8-(1-D-ribityl)lumazine + phosphate + 2 H2O + H(+). The protein operates within cofactor biosynthesis; riboflavin biosynthesis; riboflavin from 2-hydroxy-3-oxobutyl phosphate and 5-amino-6-(D-ribitylamino)uracil: step 1/2. Its function is as follows. Catalyzes the formation of 6,7-dimethyl-8-ribityllumazine by condensation of 5-amino-6-(D-ribitylamino)uracil with 3,4-dihydroxy-2-butanone 4-phosphate. This is the penultimate step in the biosynthesis of riboflavin. In Clostridium botulinum (strain 657 / Type Ba4), this protein is 6,7-dimethyl-8-ribityllumazine synthase.